Here is a 327-residue protein sequence, read N- to C-terminus: Movement protein (327 aa).

Residues aspartate 252–methionine 311 are a coiled coil. Disordered regions lie at residues arginine 271–glutamine 294 and lysine 307–valine 327. Positions glycine 313–valine 327 are enriched in polar residues.

It is found in the host cell wall. The protein localises to the host cytoplasm. In terms of biological role, transports viral genome to neighboring plant cells directly through plasmosdesmata, without any budding. The movement protein allows efficient cell to cell propagation, by bypassing the host cell wall barrier. The protein is Movement protein of Hordeum vulgare (Barley).